The sequence spans 217 residues: MKFFVDTAEIDAIAELNDLGMVDGVTTNPSLIKKSGRDIIEVTKEICDLVDGPVSAEVTATDAETMIAEGRKLLEIADNITVKVPLTWDGLKACKTLTDDGHKVNVTLCFSANQALLAAKAGATFISPFIGRLDDVNLDGMDLIEDIRTVYDNYGFETEILAASIRTVNHILDSARIGADVITAPPAVIKSMVNHPLTDKGLDAFLADIKAAGIKIL.

Lys83 serves as the catalytic Schiff-base intermediate with substrate.

This sequence belongs to the transaldolase family. Type 3B subfamily.

It localises to the cytoplasm. The catalysed reaction is D-sedoheptulose 7-phosphate + D-glyceraldehyde 3-phosphate = D-erythrose 4-phosphate + beta-D-fructose 6-phosphate. It functions in the pathway carbohydrate degradation; pentose phosphate pathway; D-glyceraldehyde 3-phosphate and beta-D-fructose 6-phosphate from D-ribose 5-phosphate and D-xylulose 5-phosphate (non-oxidative stage): step 2/3. In terms of biological role, transaldolase is important for the balance of metabolites in the pentose-phosphate pathway. This is Probable transaldolase from Ruegeria sp. (strain TM1040) (Silicibacter sp.).